The sequence spans 312 residues: DNA-directed RNA polymerase subunit alpha (312 aa).

The segment at 1–226 (MIEFEKPIIT…EHLNLFTDLT (226 aa)) is alpha N-terminal domain (alpha-NTD). An alpha C-terminal domain (alpha-CTD) region spans residues 242 to 312 (NDEKVLDRTI…DLGLGLKNDK (71 aa)).

The protein belongs to the RNA polymerase alpha chain family. As to quaternary structure, homodimer. The RNAP catalytic core consists of 2 alpha, 1 beta, 1 beta' and 1 omega subunit. When a sigma factor is associated with the core the holoenzyme is formed, which can initiate transcription.

It catalyses the reaction RNA(n) + a ribonucleoside 5'-triphosphate = RNA(n+1) + diphosphate. Its function is as follows. DNA-dependent RNA polymerase catalyzes the transcription of DNA into RNA using the four ribonucleoside triphosphates as substrates. In Streptococcus agalactiae serotype Ia (strain ATCC 27591 / A909 / CDC SS700), this protein is DNA-directed RNA polymerase subunit alpha.